The primary structure comprises 606 residues: Ubiquitin carboxyl-terminal hydrolase 2 (606 aa).

A necessary for interaction with MDM4 region spans residues 1 to 201 (MSQLSSTLKR…RSEYLADYLE (201 aa)). Disordered regions lie at residues 53–112 (PSPP…GGSG) and 207–228 (ASAP…LSPT). The segment covering 90–100 (KRAESQTRGTE) has biased composition (basic and acidic residues). The USP domain maps to 268–600 (AGLRNLGNTC…DAYLLFYELA (333 aa)). Catalysis depends on cysteine 277, which acts as the Nucleophile. Residues 404-504 (YLEREDSRIG…FPKILVLHLK (101 aa)) are necessary for interaction with MDM4. Residues cysteine 426, cysteine 429, cysteine 477, and cysteine 480 each contribute to the Zn(2+) site. The Proton acceptor role is filled by histidine 558.

This sequence belongs to the peptidase C19 family. USP2 subfamily. Homooligomer. Found in trimeric complex with MDM2 and MDM4 and USP2. Interacts with CCND1; the interaction is direct and promotes its stabilization by antagonizing ubiquitin-dependent degradation. Interacts (via N-terminus and C-terminus) with MDM2. Interacts with MDM4 and PER1. Interacts with KCNQ1; counteracts the NEDD4L-specific down-regulation of I(Ks) and restores plasma membrane localization of KCNQ1.

The protein localises to the cytoplasm. The protein resides in the perinuclear region. The enzyme catalyses Thiol-dependent hydrolysis of ester, thioester, amide, peptide and isopeptide bonds formed by the C-terminal Gly of ubiquitin (a 76-residue protein attached to proteins as an intracellular targeting signal).. Cleavage is inhibited by ubiquitin in a dosage-dependent manner. Cleavage is blocked by ubiquitin aldehyde. Hydrolase that deubiquitinates polyubiquitinated target proteins such as MDM2, MDM4 and CCND1. Possesses both ubiquitin-specific peptidase and isopeptidase activities. Deubiquitinates MDM2 without reversing MDM2-mediated p53/TP53 ubiquitination and thus indirectly promotes p53/TP53 degradation and limits p53 activity. Has no deubiquitinase activity against p53/TP53. Prevents MDM2-mediated degradation of MDM4. Plays a role in the G1/S cell-cycle progression in normal and cancer cells. Plays a role in the regulation of myogenic differentiation of embryonic muscle cells. Regulates the circadian clock by modulating its intrinsic circadian rhythm and its capacity to respond to external cues. Associates with clock proteins and deubiquitinates core clock component PER1 but does not affect its overall stability. Regulates the nucleocytoplasmic shuttling and nuclear retention of PER1 and its repressive role on the clock transcription factors CLOCK and BMAL1. The sequence is that of Ubiquitin carboxyl-terminal hydrolase 2 (USP2) from Bos taurus (Bovine).